The sequence spans 793 residues: von Willebrand factor A domain-containing protein 5A (793 aa).

The VIT domain maps to 1–131; it reads MEHHCGLITS…KVAVTLRYVQ (131 aa). Residues 281–469 form the VWFA domain; it reads EFVFLMDRSG…FALQCAVDNI (189 aa). Y622 carries the post-translational modification Phosphotyrosine.

In terms of biological role, may play a role in tumorigenesis as a tumor suppressor. Altered expression of this protein and disruption of the molecular pathway it is involved in may contribute directly to or modify tumorigenesis. The polypeptide is von Willebrand factor A domain-containing protein 5A (Vwa5a) (Mus musculus (Mouse)).